A 247-amino-acid chain; its full sequence is Probable cyclic nucleotide phosphodiesterase XBJ1_0953 (247 aa).

Fe cation-binding residues include Asp8, His10, Asp52, Asn82, His154, His192, and His194. Residues His10, Asp52, and Asn82 to His83 each bind AMP. His194 contacts AMP.

The protein belongs to the cyclic nucleotide phosphodiesterase class-III family. Fe(2+) is required as a cofactor.

This is Probable cyclic nucleotide phosphodiesterase XBJ1_0953 from Xenorhabdus bovienii (strain SS-2004) (Xenorhabdus nematophila subsp. bovienii).